Here is a 243-residue protein sequence, read N- to C-terminus: Type III pantothenate kinase (243 aa).

6–13 (DIGNTNLK) is an ATP binding site. Residue 101–104 (GSDI) participates in substrate binding. D103 serves as the catalytic Proton acceptor. Residue T125 coordinates ATP. T176 lines the substrate pocket.

It belongs to the type III pantothenate kinase family. As to quaternary structure, homodimer. NH4(+) is required as a cofactor. It depends on K(+) as a cofactor.

Its subcellular location is the cytoplasm. It carries out the reaction (R)-pantothenate + ATP = (R)-4'-phosphopantothenate + ADP + H(+). It participates in cofactor biosynthesis; coenzyme A biosynthesis; CoA from (R)-pantothenate: step 1/5. Functionally, catalyzes the phosphorylation of pantothenate (Pan), the first step in CoA biosynthesis. In Mycoplasma mobile (strain ATCC 43663 / 163K / NCTC 11711) (Mesomycoplasma mobile), this protein is Type III pantothenate kinase.